The chain runs to 250 residues: Probable transcriptional regulatory protein Rxyl_1318 (250 aa).

The protein belongs to the TACO1 family.

The protein localises to the cytoplasm. The protein is Probable transcriptional regulatory protein Rxyl_1318 of Rubrobacter xylanophilus (strain DSM 9941 / JCM 11954 / NBRC 16129 / PRD-1).